Reading from the N-terminus, the 126-residue chain is Glycine cleavage system H protein (126 aa).

The Lipoyl-binding domain maps to 22–104 (KLRIGITDFA…YEKAWMIVIE (83 aa)). The residue at position 63 (lysine 63) is an N6-lipoyllysine.

This sequence belongs to the GcvH family. As to quaternary structure, the glycine cleavage system is composed of four proteins: P, T, L and H. It depends on (R)-lipoate as a cofactor.

In terms of biological role, the glycine cleavage system catalyzes the degradation of glycine. The H protein shuttles the methylamine group of glycine from the P protein to the T protein. Is also involved in protein lipoylation via its role as an octanoyl/lipoyl carrier protein intermediate. In Oceanobacillus iheyensis (strain DSM 14371 / CIP 107618 / JCM 11309 / KCTC 3954 / HTE831), this protein is Glycine cleavage system H protein.